The chain runs to 468 residues: UDP-N-acetylmuramate--L-alanine ligase (468 aa).

ATP is bound at residue 117–123; that stretch reads GTHGKTT.

It belongs to the MurCDEF family.

Its subcellular location is the cytoplasm. The catalysed reaction is UDP-N-acetyl-alpha-D-muramate + L-alanine + ATP = UDP-N-acetyl-alpha-D-muramoyl-L-alanine + ADP + phosphate + H(+). It participates in cell wall biogenesis; peptidoglycan biosynthesis. Functionally, cell wall formation. This is UDP-N-acetylmuramate--L-alanine ligase from Maricaulis maris (strain MCS10) (Caulobacter maris).